Reading from the N-terminus, the 271-residue chain is Digeranylgeranylglyceryl phosphate synthase (271 aa).

A run of 8 helical transmembrane segments spans residues 11 to 31 (INCAMAALGVVVGELIAGARL), 33 to 53 (VGAVLAPVVAAVVCAGGNAIN), 88 to 108 (FAVGVGMATVINRMCLAIAAL), 125 to 145 (LIGNVMVSYLVGSCFLFGAAV), 149 to 169 (PAPAVWLFLLAFLANLVREIL), 201 to 221 (VFAIALAVLTPLPYLDGVVGW), 224 to 244 (LVLALPAAAVILLASVLAVAG), and 251 to 271 (AQRVVKVGMLLGLLAFLASLL).

The protein belongs to the UbiA prenyltransferase family. DGGGP synthase subfamily. It depends on Mg(2+) as a cofactor.

The protein resides in the cell membrane. It carries out the reaction sn-3-O-(geranylgeranyl)glycerol 1-phosphate + (2E,6E,10E)-geranylgeranyl diphosphate = 2,3-bis-O-(geranylgeranyl)-sn-glycerol 1-phosphate + diphosphate. The protein operates within membrane lipid metabolism; glycerophospholipid metabolism. In terms of biological role, prenyltransferase that catalyzes the transfer of the geranylgeranyl moiety of geranylgeranyl diphosphate (GGPP) to the C2 hydroxyl of (S)-3-O-geranylgeranylglyceryl phosphate (GGGP). This reaction is the second ether-bond-formation step in the biosynthesis of archaeal membrane lipids. The polypeptide is Digeranylgeranylglyceryl phosphate synthase (Methanopyrus kandleri (strain AV19 / DSM 6324 / JCM 9639 / NBRC 100938)).